A 299-amino-acid chain; its full sequence is Protease HtpX homolog (299 aa).

The next 2 helical transmembrane spans lie at 15–35 (ILLL…GYLF) and 39–59 (GLGG…SMIF). H143 provides a ligand contact to Zn(2+). The active site involves E144. H147 contributes to the Zn(2+) binding site. 2 consecutive transmembrane segments (helical) span residues 158–178 (IAVA…RMMW) and 198–218 (IIML…ATLV). A Zn(2+)-binding site is contributed by E227.

The protein belongs to the peptidase M48B family. It depends on Zn(2+) as a cofactor.

The protein resides in the cell membrane. The polypeptide is Protease HtpX homolog (Streptococcus pneumoniae serotype 19F (strain G54)).